Consider the following 106-residue polypeptide: ATP-dependent Clp protease adapter protein ClpS (106 aa).

Belongs to the ClpS family. As to quaternary structure, binds to the N-terminal domain of the chaperone ClpA.

In terms of biological role, involved in the modulation of the specificity of the ClpAP-mediated ATP-dependent protein degradation. The sequence is that of ATP-dependent Clp protease adapter protein ClpS from Vibrio vulnificus (strain CMCP6).